A 68-amino-acid chain; its full sequence is Large ribosomal subunit protein uL29 (68 aa).

This sequence belongs to the universal ribosomal protein uL29 family.

The sequence is that of Large ribosomal subunit protein uL29 from Geobacillus sp. (strain WCH70).